Here is a 277-residue protein sequence, read N- to C-terminus: Carbonyl reductase [NADPH] 1 (277 aa).

The residue at position 2 (serine 2) is an N-acetylserine. Residue serine 2 is modified to Phosphoserine. NADP(+) is bound by residues 10–34 (VTGANKGIGFAIVRDLCRKFLGDVV), 63–64 (DI), and asparagine 90. Residues 95–97 (FKV) and glutamine 106 contribute to the glutathione site. Serine 140 serves as a coordination point for substrate. 193–194 (AY) contributes to the glutathione binding site. The Proton acceptor role is filled by tyrosine 194. NADP(+) is bound by residues 194-198 (YGVTK) and 231-233 (VRT). Residue lysine 239 is modified to N6-1-carboxyethyl lysine. The interval 258 to 277 (PPGAEGPHGQFVQDKKVEPW) is disordered.

This sequence belongs to the short-chain dehydrogenases/reductases (SDR) family. Monomer.

The protein localises to the cytoplasm. It catalyses the reaction a secondary alcohol + NADP(+) = a ketone + NADPH + H(+). The enzyme catalyses prostaglandin F2alpha + NADP(+) = prostaglandin E2 + NADPH + H(+). The catalysed reaction is prostaglandin E1 + NADP(+) = 15-oxoprostaglandin E1 + NADPH + H(+). It carries out the reaction menadione + NADPH + H(+) = menadiol + NADP(+). It catalyses the reaction prostaglandin D2 + NADP(+) = 15-oxoprostaglandin D2 + NADPH + H(+). The enzyme catalyses prostaglandin E2 + NADP(+) = 15-oxoprostaglandin E2 + NADPH + H(+). The catalysed reaction is prostaglandin F2alpha + NADP(+) = 15-oxoprostaglandin F2alpha + NADPH + H(+). It carries out the reaction daunorubicin + NADPH + H(+) = 13-dihydrodaunorubicin + NADP(+). It catalyses the reaction S-nitrosoglutathione + NADPH + H(+) = S-(hydroxysulfenamide)glutathione + NADP(+). The enzyme catalyses a primary alcohol + NADP(+) = an aldehyde + NADPH + H(+). The catalysed reaction is cortisol + NADPH + H(+) = 20beta-dihydrocortisol + NADP(+). It carries out the reaction corticosterone + NADPH + H(+) = 20beta-dihydrocorticosterone + NADP(+). Its function is as follows. NADPH-dependent reductase with broad substrate specificity. Catalyzes the reduction of a wide variety of carbonyl compounds including quinones, prostaglandins, menadione, plus various xenobiotics. Catalyzes the reduction of the antitumor anthracyclines doxorubicin and daunorubicin to the cardiotoxic compounds doxorubicinol and daunorubicinol. Can convert prostaglandin E to prostaglandin F2-alpha. Can bind glutathione, which explains its higher affinity for glutathione-conjugated substrates. Catalyzes the reduction of S-nitrosoglutathione. In addition, participates in the glucocorticoid metabolism by catalyzing the NADPH-dependent cortisol/corticosterone into 20beta-dihydrocortisol (20b-DHF) or 20beta-corticosterone (20b-DHB), which are weak agonists of NR3C1 and NR3C2 in adipose tissue. This chain is Carbonyl reductase [NADPH] 1, found in Rattus norvegicus (Rat).